The primary structure comprises 435 residues: Zinc metalloproteinase/disintegrin (435 aa).

The propeptide occupies 1–26; sequence KMCGVTQNWESYESTKKASQLNLTPE. Gln-27 is modified (pyrrolidone carboxylic acid). In terms of domain architecture, Peptidase M12B spans 33-227; that stretch reads RYIKLGIFVD…HNFQCILNAP (195 aa). Asn-115 is a glycosylation site (N-linked (GlcNAc...) asparagine). 3 disulfides stabilise this stretch: Cys-144–Cys-222, Cys-184–Cys-206, and Cys-186–Cys-189. His-169 provides a ligand contact to Zn(2+). Glu-170 is an active-site residue. Zn(2+) is bound by residues His-173 and His-179. Residues 228 to 243 constitute a propeptide that is removed on maturation; the sequence is LRTDTVSTPVSGNELL. Positions 235-318 constitute a Disintegrin domain; it reads TPVSGNELLE…DCPTDDFHRN (84 aa). 6 residues coordinate Ca(2+): Val-237, Asn-240, Leu-242, Glu-244, Glu-247, and Asp-250. 6 disulfide bridges follow: Cys-249–Cys-264, Cys-251–Cys-259, Cys-258–Cys-281, Cys-272–Cys-278, Cys-277–Cys-303, and Cys-290–Cys-310. A D/ECD-tripeptide motif is present at residues 296 to 298; sequence ECD.

The protein belongs to the venom metalloproteinase (M12B) family. P-III subfamily. P-IIIb sub-subfamily. As to quaternary structure, monomer. Zn(2+) is required as a cofactor. Post-translationally, the N-terminus of the metalloproteinase is blocked. Expressed by the venom gland.

The protein localises to the secreted. Its activity is regulated as follows. Inhibited by EDTA. In terms of biological role, cleaves the alpha chain of fibrinogen (FGA) preferentially and cleaves the beta chain (FGB) either on longer incubation or at high concentrations. Induces apoptosis of endothelial cells (prior to cell detachment). Functionally, disintegrin: inhibits platelet aggregation induced by ADP, thrombin, platelet-activating factor and collagen. Acts by inhibiting fibrinogen interaction with platelet receptors GPIIb/GPIIIa (ITGA2B/ITGB3). This Craspedocephalus gramineus (Bamboo pit viper) protein is Zinc metalloproteinase/disintegrin.